A 1176-amino-acid chain; its full sequence is Serine/threonine-protein kinase pakF (1176 aa).

Low complexity-rich tracts occupy residues 1 to 19 (MSNL…ESSS) and 32 to 52 (NLLN…SGSN). Disordered regions lie at residues 1 to 231 (MSNL…HESR) and 254 to 361 (LPST…KKTK). Residues 64-76 (QLPPNYTPPPPPH) are compositionally biased toward pro residues. Residues 92 to 133 (LNNENSDNNNNNNNNNNNNNNNNNNNNNNNNNNNEQLARTES) are a coiled coil. Composition is skewed to low complexity over residues 93-125 (NNEN…NNNN), 133-148 (SSVS…SNSG), and 156-172 (SSNI…ETYS). A compositionally biased stretch (polar residues) spans 173–197 (MSPNQTLNSNIDSSEQQHQDLSSSV). Residues 198–226 (NNNNNNNNNNNNNNNNNNNNNNNNNNNNN) show a composition bias toward low complexity. The span at 254–289 (LPSTPTQQNVEIQTTNGGSSETSPNGLISPRPSNDQ) shows a compositional bias: polar residues. Residues 316–353 (SLSSSTTTPSTTSSLTSSPSSSSLAISSPNTTAATTTN) are compositionally biased toward low complexity. The CRIB domain occupies 370-383 (ISVPYNVIHKMHVD). The Protein kinase domain maps to 394-646 (FILDEKLGDG…PIDLLCHPFL (253 aa)). ATP contacts are provided by residues 400 to 408 (LGDGAYGSV) and Lys-423. Residue Asp-514 is the Proton acceptor of the active site. 4 disordered regions span residues 670–723 (IDDL…SDEL), 753–885 (QEEE…GNNL), 968–1083 (HTTS…TGRA), and 1112–1176 (NSNS…NIKK). Composition is skewed to low complexity over residues 682-693 (SQSSSSSSPQSP) and 710-720 (SIISPIPSSPS). 2 stretches are compositionally biased toward acidic residues: residues 767–789 (DEQD…EDVD) and 813–844 (DQDD…DEEI). Residues 812 to 873 (SDQDDEEEDE…NKKKNKKNNL (62 aa)) are a coiled coil. Residues 852–870 (VRKKKNKSTKKSNKKKNKK) are compositionally biased toward basic residues. Polar residues-rich tracts occupy residues 873 to 884 (LSTIGKSGSGNN) and 968 to 985 (HTTS…ATNL). Composition is skewed to low complexity over residues 991 to 1044 (SSSP…RPNS), 1051 to 1066 (NNSS…SSSS), and 1148 to 1176 (SSGS…NIKK).

It belongs to the protein kinase superfamily. STE Ser/Thr protein kinase family. STE20 subfamily. The cofactor is Mg(2+).

The catalysed reaction is L-seryl-[protein] + ATP = O-phospho-L-seryl-[protein] + ADP + H(+). It catalyses the reaction L-threonyl-[protein] + ATP = O-phospho-L-threonyl-[protein] + ADP + H(+). This is Serine/threonine-protein kinase pakF from Dictyostelium discoideum (Social amoeba).